A 913-amino-acid polypeptide reads, in one-letter code: MKDSENKGASSPDMEPSYGGGLFDMVKGGAGRLFSNLKDNLKDTLKDTSSRVIQSVTSYTKGDLDFTYVTSRIIVMSFPLDNVDIGFRNQVDDIRSFLDSRHLDHYTVYNLSPKSYRTAKFHSRVSECSWPIRQAPSLHNLFAVCRNMYNWLLQNPKNVCVVHCLDGRAASSILVGAMFIFCNLYSTPGPAIRLLYAKRPGIGLSPSHRRYLGYMCDLLADKPYRPHFKPLTIKSITVSPIPFFNKQRNGCRPYCDVLIGETKIYSTCTDFERMKEYRVQDGKIFIPLNITVQGDVVVSMYHLRSTIGSRLQAKVTNTQIFQLQFHTGFIPLDTTVLKFTKPELDACDVPEKYPQLFQVTLDVELQPHDKVIDLTPPWEHYCTKDVNPSILFSSHQEHQDTLALGGQAPIDIPPDNPRHYGQSGFFASLCWQDQKSEKSFCEEDHAALVNQESEQSDDELLTLSSPHGNANGDKPHGVKKPSKKQQEPAAPPPPEDVDLLGLEGSAMSNSFSPPAAPPTNSELLSDLFGGGGAAGPTQAGQSGVEDVFHPSGPASTQSTPRRSATSTSASPTLRVGEGATFDPFGAPSKPSGQDLLGSFLNTSSASSDPFLQPTRSPSPTVHASSTPAVNIQPDVSGGWDWHAKPGGFGMGSKSAATSPTGSSHGTPTHQSKPQTLDPFADLGTLGSSSFASKPTTPTGLGGGFPPLSSPQKASPQPMGGGWQQGGAYNWQQPQPKPQPSMPHSSPQNRPNYNVSFSAMPGGQNERGKGSSNLEGKQKAADFEDLLSGQGFNAHKDKKGPRTIAEMRKEEMAKEMDPEKLKILEWIEGKERNIRALLSTMHTVLWAGETKWKPVGMADLVTPEQVKKVYRKAVLVVHPDKATGQPYEQYAKMIFMELNDAWSEFENQGQKPLY.

Met1 carries the post-translational modification N-acetylmethionine. Tandem repeats lie at residues 36 to 39 (NLKD), 40 to 43 (NLKD), and 44 to 47 (TLKD). A 3 X 4 AA approximate tandem repeats region spans residues 36–47 (NLKDNLKDTLKD). Residues 55 to 222 (SVTSYTKGDL…GYMCDLLADK (168 aa)) enclose the Phosphatase tensin-type domain. Position 112 is a phosphoserine (Ser112). The active-site Phosphocysteine intermediate is Cys164. The C2 tensin-type domain occupies 228 to 366 (FKPLTIKSIT…FQVTLDVELQ (139 aa)). The short motif at 409–417 (PIDIPPDNP) is the SH3-binding element. The tract at residues 451-776 (QESEQSDDEL…GKGSSNLEGK (326 aa)) is disordered. 2 positions are modified to phosphoserine: Ser453 and Ser456. A compositionally biased stretch (polar residues) spans 506-523 (AMSNSFSPPAAPPTNSEL). A compositionally biased stretch (low complexity) spans 554-572 (ASTQSTPRRSATSTSASPT). Residues Ser563 and Ser570 each carry the phosphoserine modification. Residues 599 to 629 (FLNTSSASSDPFLQPTRSPSPTVHASSTPAV) show a composition bias toward polar residues. Residues 654–669 (SAATSPTGSSHGTPTH) are compositionally biased toward low complexity. Residues 849–913 (TKWKPVGMAD…FENQGQKPLY (65 aa)) enclose the J domain.

As to quaternary structure, forms a complex composed of HSPA8, CLTC and DNAJC6. Interacts with HSPA8/HSC70 in an ATP-dependent manner; this interaction stimulates the HSPA8's ATPase activity. Interacts with CLTC; this interaction produces a local change in heavy-chain contacts, creating a detectable global distortion of the clathrin coat. Interacts with AP2A2. Interacts with DNM1(GTP-bound form); this interaction allows clathrin-coated vesicle (CCV) formation at the plasma membrane. In terms of processing, phosphorylation at Ser-570 modulates its ability to bind CLTC and therefore the synaptic vesicle endocytosis (SVE). The N-terminus is blocked. As to expression, expressed in various brain regions, including cerebellum, corpus callosum, cortex, striatum, brainstem, pons, putamen, spinal cord and substantia nigra. Very low expression in non-neural tissues such as leukocytes, liver, adipose tissue, skeletal muscle and bone marrow.

The protein localises to the cytoplasmic vesicle. The protein resides in the clathrin-coated vesicle. May act as a protein phosphatase and/or a lipid phosphatase. Co-chaperone that recruits HSPA8/HSC70 to clathrin-coated vesicles (CCVs) and promotes the ATP-dependent dissociation of clathrin from CCVs and participates in clathrin-mediated endocytosis of synaptic vesicles and their recycling and also in intracellular trafficking. Firstly, binds tightly to the clathrin cages, at a ratio of one DNAJC6 per clathrin triskelion. The HSPA8:ATP complex then binds to the clathrin-auxilin cage, initially at a ratio of one HSPA8 per triskelion leading to ATP hydrolysis stimulation and causing a conformational change in the HSPA8. This cycle is repeated three times to drive to a complex containing the clathrin-auxilin cage associated to three HSPA8:ADP complex. The ATP hydrolysis of the third HSPA8:ATP complex leads to a concerted dismantling of the cage into component triskelia. Then, dissociates from the released triskelia and be recycled to initiate another cycle of HSPA8's recruitment. Also acts during the early steps of clathrin-coated vesicle (CCV) formation through its interaction with the GTP bound form of DNM1. The sequence is that of Auxilin from Homo sapiens (Human).